We begin with the raw amino-acid sequence, 96 residues long: Class I hydrophobin 2 (96 aa).

An N-terminal signal peptide occupies residues 1–15 (MFKALIVALAAVAAA). 4 disulfide bridges follow: C28/C77, C34/C71, C35/C55, and C78/C91.

It belongs to the fungal hydrophobin family.

Its subcellular location is the secreted. It localises to the cell wall. Functionally, aerial growth, conidiation, and dispersal of filamentous fungi in the environment rely upon a capability of their secreting small amphipathic proteins called hydrophobins (HPBs) with low sequence identity. Class I can self-assemble into an outermost layer of rodlet bundles on aerial cell surfaces, conferring cellular hydrophobicity that supports fungal growth, development and dispersal; whereas Class II form highly ordered films at water-air interfaces through intermolecular interactions but contribute nothing to the rodlet structure. Hyd2 plays a neglectable role in hyphal growth and asexual development and does not seem involved in cellular hydrophobicity, conidial adhesion, stress tolerance nor insect pathogenicity. This is Class I hydrophobin 2 from Metarhizium robertsii (strain ARSEF 23 / ATCC MYA-3075) (Metarhizium anisopliae (strain ARSEF 23)).